The chain runs to 269 residues: 4-hydroxy-tetrahydrodipicolinate reductase (269 aa).

Residues 8–13 (GAAGRM) and E34 contribute to the NAD(+) site. R35 lines the NADP(+) pocket. Residues 98-100 (GTT) and 122-125 (APNY) contribute to the NAD(+) site. H155 serves as the catalytic Proton donor/acceptor. Residue H156 coordinates (S)-2,3,4,5-tetrahydrodipicolinate. K159 serves as the catalytic Proton donor. 165 to 166 (GT) is a (S)-2,3,4,5-tetrahydrodipicolinate binding site.

The protein belongs to the DapB family.

Its subcellular location is the cytoplasm. It catalyses the reaction (S)-2,3,4,5-tetrahydrodipicolinate + NAD(+) + H2O = (2S,4S)-4-hydroxy-2,3,4,5-tetrahydrodipicolinate + NADH + H(+). The enzyme catalyses (S)-2,3,4,5-tetrahydrodipicolinate + NADP(+) + H2O = (2S,4S)-4-hydroxy-2,3,4,5-tetrahydrodipicolinate + NADPH + H(+). It functions in the pathway amino-acid biosynthesis; L-lysine biosynthesis via DAP pathway; (S)-tetrahydrodipicolinate from L-aspartate: step 4/4. In terms of biological role, catalyzes the conversion of 4-hydroxy-tetrahydrodipicolinate (HTPA) to tetrahydrodipicolinate. In Vibrio campbellii (strain ATCC BAA-1116), this protein is 4-hydroxy-tetrahydrodipicolinate reductase.